An 840-amino-acid chain; its full sequence is Probable alpha-glucuronidase A (840 aa).

The N-terminal stretch at 1 to 19 (MRSVITTLTLVASVGLAVA) is a signal peptide. N222, N310, N465, N527, N576, N682, and N732 each carry an N-linked (GlcNAc...) asparagine glycan.

It belongs to the glycosyl hydrolase 67 family.

It is found in the secreted. It carries out the reaction an alpha-D-glucuronoside + H2O = D-glucuronate + an alcohol. Alpha-glucuronidase involved in the hydrolysis of xylan, a major structural heterogeneous polysaccharide found in plant biomass representing the second most abundant polysaccharide in the biosphere, after cellulose. Releases 4-O-methylglucuronic acid from xylan. The sequence is that of Probable alpha-glucuronidase A (aguA) from Aspergillus clavatus (strain ATCC 1007 / CBS 513.65 / DSM 816 / NCTC 3887 / NRRL 1 / QM 1276 / 107).